Consider the following 132-residue polypeptide: Phosphomevalonate dehydratase small subunit (132 aa).

The Proton acceptor role is filled by Ser-62.

This sequence belongs to the AcnX type II small subunit family. Heterodimer composed of a large subunit (PMDh-L) and a small subunit (PMDh-S).

The enzyme catalyses (R)-5-phosphomevalonate = (2E)-3-methyl-5-phosphooxypent-2-enoate + H2O. It participates in isoprenoid biosynthesis; isopentenyl diphosphate biosynthesis via mevalonate pathway. Component of a hydro-lyase that catalyzes the dehydration of mevalonate 5-phosphate (MVA5P) to form trans-anhydromevalonate 5-phosphate (tAHMP). Involved in the archaeal mevalonate (MVA) pathway, which provides fundamental precursors for isoprenoid biosynthesis, such as isopentenyl diphosphate (IPP) and dimethylallyl diphosphate (DMAPP). This Methanocella arvoryzae (strain DSM 22066 / NBRC 105507 / MRE50) protein is Phosphomevalonate dehydratase small subunit.